The chain runs to 317 residues: uncharacterized protein (317 aa).

Residues 1–13 are Cytoplasmic-facing; sequence MKRVTGVFLTLLR. Residues 14–34 traverse the membrane as a helical segment; it reads FSQFASSVLVMSLLAYAIHAY. Residues 35-49 are Extracellular-facing; it reads GNRGNKKTNFTLATG. Asn43 is a glycosylation site (N-linked (GlcNAc...) asparagine). Residues 50-70 form a helical membrane-spanning segment; the sequence is VISVFYLIALGILCLALPTLI. A topological domain (cytoplasmic) is located at residue Tyr71. Residues 72–92 traverse the membrane as a helical segment; that stretch reads IGMYFCAELIVCMLWLAAFVV. The Extracellular segment spans residues 93 to 133; it reads LAKAQGERSCSNTNADGLYYNPYSGQYTADSHRRACNSSQA. A glycan (N-linked (GlcNAc...) asparagine) is linked at Asn129. A helical membrane pass occupies residues 134–154; that stretch reads AIAFSGLCFVLFLISVILLGI. Residues 155-317 are Cytoplasmic-facing; sequence NVLTPIRKRY…EPNRNVNQMP (163 aa). The disordered stretch occupies residues 204-317; that stretch reads RTGDVEAGAG…EPNRNVNQMP (114 aa). The span at 239–250 shows a compositional bias: low complexity; that stretch reads TTTTNTRYTTTT. Polar residues predominate over residues 256-282; it reads RYTTNDRNPGSANVANSAVDQHAYSTD. Positions 284–295 are enriched in basic and acidic residues; the sequence is SGDRSYQEKVTE. Positions 302–317 are enriched in polar residues; that stretch reads MSGSTAEPNRNVNQMP.

The protein localises to the membrane. This is an uncharacterized protein from Saccharomyces cerevisiae (strain ATCC 204508 / S288c) (Baker's yeast).